Consider the following 383-residue polypeptide: S-adenosylmethionine synthase (383 aa).

Residue H15 participates in ATP binding. A Mg(2+)-binding site is contributed by D17. K(+) is bound at residue E43. L-methionine-binding residues include E56 and Q99. The interval 99 to 109 (QSSDINQGVDR) is flexible loop. ATP-binding positions include 164-166 (DAK), 230-231 (RF), D239, 245-246 (RK), A262, and K266. Residue D239 coordinates L-methionine. K270 serves as a coordination point for L-methionine.

Belongs to the AdoMet synthase family. Homotetramer; dimer of dimers. Mg(2+) serves as cofactor. It depends on K(+) as a cofactor.

The protein resides in the cytoplasm. The enzyme catalyses L-methionine + ATP + H2O = S-adenosyl-L-methionine + phosphate + diphosphate. It participates in amino-acid biosynthesis; S-adenosyl-L-methionine biosynthesis; S-adenosyl-L-methionine from L-methionine: step 1/1. In terms of biological role, catalyzes the formation of S-adenosylmethionine (AdoMet) from methionine and ATP. The overall synthetic reaction is composed of two sequential steps, AdoMet formation and the subsequent tripolyphosphate hydrolysis which occurs prior to release of AdoMet from the enzyme. The sequence is that of S-adenosylmethionine synthase from Mannheimia succiniciproducens (strain KCTC 0769BP / MBEL55E).